Here is a 318-residue protein sequence, read N- to C-terminus: Pantothenate kinase (318 aa).

96 to 103 (GSVAVGKS) is an ATP binding site.

It belongs to the prokaryotic pantothenate kinase family.

The protein localises to the cytoplasm. It catalyses the reaction (R)-pantothenate + ATP = (R)-4'-phosphopantothenate + ADP + H(+). Its pathway is cofactor biosynthesis; coenzyme A biosynthesis; CoA from (R)-pantothenate: step 1/5. The protein is Pantothenate kinase of Coxiella burnetii (strain RSA 493 / Nine Mile phase I).